A 280-amino-acid chain; its full sequence is Cycloeucalenol cycloisomerase (280 aa).

The next 6 membrane-spanning stretches (helical) occupy residues 22 to 42 (LFFL…VVPY), 53 to 73 (YLLL…LLVG), 89 to 109 (ANLW…HYFF), 167 to 187 (FEAA…TIAI), 201 to 221 (MYRV…PMFF), and 244 to 264 (AMLV…IVPL).

It is found in the membrane. The catalysed reaction is cycloeucalenol = obtusifoliol. Converts pentacyclic cyclopropyl sterols to tetracyclic sterols. This chain is Cycloeucalenol cycloisomerase (CPI1), found in Arabidopsis thaliana (Mouse-ear cress).